The following is a 122-amino-acid chain: Large ribosomal subunit protein uL14 (122 aa).

The protein belongs to the universal ribosomal protein uL14 family. As to quaternary structure, part of the 50S ribosomal subunit. Forms a cluster with proteins L3 and L19. In the 70S ribosome, L14 and L19 interact and together make contacts with the 16S rRNA in bridges B5 and B8.

In terms of biological role, binds to 23S rRNA. Forms part of two intersubunit bridges in the 70S ribosome. In Shewanella amazonensis (strain ATCC BAA-1098 / SB2B), this protein is Large ribosomal subunit protein uL14.